Here is a 223-residue protein sequence, read N- to C-terminus: Deoxyribose-phosphate aldolase (223 aa).

The Proton donor/acceptor role is filled by Asp89. Residue Lys152 is the Schiff-base intermediate with acetaldehyde of the active site. The active-site Proton donor/acceptor is the Lys181.

It belongs to the DeoC/FbaB aldolase family. DeoC type 1 subfamily.

Its subcellular location is the cytoplasm. It catalyses the reaction 2-deoxy-D-ribose 5-phosphate = D-glyceraldehyde 3-phosphate + acetaldehyde. It participates in carbohydrate degradation; 2-deoxy-D-ribose 1-phosphate degradation; D-glyceraldehyde 3-phosphate and acetaldehyde from 2-deoxy-alpha-D-ribose 1-phosphate: step 2/2. Its function is as follows. Catalyzes a reversible aldol reaction between acetaldehyde and D-glyceraldehyde 3-phosphate to generate 2-deoxy-D-ribose 5-phosphate. This chain is Deoxyribose-phosphate aldolase, found in Bacillus cereus (strain ATCC 14579 / DSM 31 / CCUG 7414 / JCM 2152 / NBRC 15305 / NCIMB 9373 / NCTC 2599 / NRRL B-3711).